We begin with the raw amino-acid sequence, 700 residues long: MATLTQKFHGLLQHPLEPLFLPKNDGTLFYDLPERFLTSRYSPIGQNLANRFGPNSPASSQVSNDTGVPPTVVTIKDLDELPDLTFATWIKRRDSFSLFNPEHRKAAGKLTKLFLDQPNADRLVDVAAYARDRLNAPLFQYALSVALLHRPDTKSVSVPSLLHLFPDQFIDPAAQVRMMEEGSIVLDENRMPIPIPMNYTATDAEPEQRMAFFREDIGVNLHHWHWHLVYPASGPPDVVRKDRRGELFYYMHQQLLARYQIDRYAQGLGRIEPLANLREPVREAYYPKLLRTSNNRTFCPRYPGMTISDVARSADRLEVRIADIESWLPRVLEAIDAGFAVSDDGVRVPLDETRGIDVLGNILERSAISINRNLYGDVHNMGHVLLAFIHDPRGTYLESSGVMGGVATAMRDPIFYRWHKFIDNIFLRNKARLAPYTMAELSNSNVTLEALETQLDRAGGAVNSFVTFWQRSQVDLRAGIDFSAAGSAFVSFTHLQCAPFVYRLRINSTARSNRQDTVRIFLLPRQNEQGRPLSFEDRRLLAIELDSFRVNLRPGMNNIVRQSSNSSVTIPFERTFGNVEQANAGNAQSRFCGCGWPAHMLLPKGNANGVEFDLFAMVSRFEDDNANVNYDENAGCDDSYAFCGLRDRVYPSRRAMGFPFDRRASNGVRSVADFVAPYKNMRLATVTLRFMNTIIDRPTN.

A propeptide spanning residues 1–51 is cleaved from the precursor; it reads MATLTQKFHGLLQHPLEPLFLPKNDGTLFYDLPERFLTSRYSPIGQNLANR. N-linked (GlcNAc...) asparagine glycosylation is found at Asn64 and Asn198. Residues His223, His227, and His252 each contribute to the Cu cation site. Asn295 is a glycosylation site (N-linked (GlcNAc...) asparagine). The active-site Proton acceptor is the Glu364. Positions 379, 383, and 419 each coordinate Cu cation. Asn445, Asn507, and Asn565 each carry an N-linked (GlcNAc...) asparagine glycan. Cystine bridges form between Cys592–Cys636 and Cys594–Cys643.

This sequence belongs to the tyrosinase family. In terms of assembly, homodimer. The cofactor is Cu(2+). In terms of processing, upon activation, a trypsin type protease cleaves prophenol oxidase to yield the active enzyme.

Its subcellular location is the secreted. It carries out the reaction 2 tyramine + O2 = 2 dopamine. The catalysed reaction is 2 dopamine + O2 = 2 dopamine quinone + 2 H2O. In terms of biological role, this is a copper-containing oxidase that functions in the formation of pigments such as melanins and other polyphenolic compounds. Catalyzes the oxidation of o-diphenols such as dopamine. Also oxidizes monophenols such as tyramine. The sequence is that of Phenoloxidase 8 from Anopheles gambiae (African malaria mosquito).